Here is a 124-residue protein sequence, read N- to C-terminus: Small ribosomal subunit protein uS12 (124 aa).

The segment at 1 to 29 (MPTINQLVRRPRRPRESANKAPALQHNPQ) is disordered. 3-methylthioaspartic acid is present on aspartate 90.

It belongs to the universal ribosomal protein uS12 family. In terms of assembly, part of the 30S ribosomal subunit. Contacts proteins S8 and S17. May interact with IF1 in the 30S initiation complex.

Its function is as follows. With S4 and S5 plays an important role in translational accuracy. Interacts with and stabilizes bases of the 16S rRNA that are involved in tRNA selection in the A site and with the mRNA backbone. Located at the interface of the 30S and 50S subunits, it traverses the body of the 30S subunit contacting proteins on the other side and probably holding the rRNA structure together. The combined cluster of proteins S8, S12 and S17 appears to hold together the shoulder and platform of the 30S subunit. The sequence is that of Small ribosomal subunit protein uS12 from Anaplasma marginale (strain Florida).